Reading from the N-terminus, the 471-residue chain is Alpha-1,3/1,6-mannosyltransferase alg-2 (471 aa).

Residues N178 and N279 are each glycosylated (N-linked (GlcNAc...) asparagine). Residues 446–466 (GMILLVVGAAVAAVAGVISAV) traverse the membrane as a helical segment.

This sequence belongs to the glycosyltransferase group 1 family. Glycosyltransferase 4 subfamily.

It localises to the endoplasmic reticulum membrane. It carries out the reaction a beta-D-Man-(1-&gt;4)-beta-D-GlcNAc-(1-&gt;4)-alpha-D-GlcNAc-diphospho-di-trans,poly-cis-dolichol + GDP-alpha-D-mannose = an alpha-D-Man-(1-&gt;3)-beta-D-Man-(1-&gt;4)-beta-D-GlcNAc-(1-&gt;4)-alpha-D-GlcNAc-diphospho-di-trans,poly-cis-dolichol + GDP + H(+). The catalysed reaction is an alpha-D-Man-(1-&gt;3)-beta-D-Man-(1-&gt;4)-beta-D-GlcNAc-(1-&gt;4)-alpha-D-GlcNAc-diphospho-di-trans,poly-cis-dolichol + GDP-alpha-D-mannose = an alpha-D-Man-(1-&gt;3)-[alpha-D-Man-(1-&gt;6)]-beta-D-Man-(1-&gt;4)-beta-D-GlcNAc-(1-&gt;4)-alpha-D-GlcNAc-diphospho-di-trans,poly-cis-dolichol + GDP + H(+). The protein operates within protein modification; protein glycosylation. Functionally, mannosylates Man(2)GlcNAc(2)-dolichol diphosphate and Man(1)GlcNAc(2)-dolichol diphosphate to form Man(3)GlcNAc(2)-dolichol diphosphate. The sequence is that of Alpha-1,3/1,6-mannosyltransferase alg-2 (alg-2) from Neurospora crassa (strain ATCC 24698 / 74-OR23-1A / CBS 708.71 / DSM 1257 / FGSC 987).